A 240-amino-acid polypeptide reads, in one-letter code: Ribonuclease 3 (240 aa).

The RNase III domain occupies 13–143 (DHASLLEALG…LLGAVHLQHG (131 aa)). E53 provides a ligand contact to Mg(2+). The active site involves D57. The Mg(2+) site is built by D129 and E132. E132 is an active-site residue. One can recognise a DRBM domain in the interval 170 to 238 (DWKTSLQELT…AGAAYQALTA (69 aa)).

The protein belongs to the ribonuclease III family. Homodimer. Mg(2+) is required as a cofactor.

The protein localises to the cytoplasm. It carries out the reaction Endonucleolytic cleavage to 5'-phosphomonoester.. In terms of biological role, digests double-stranded RNA. Involved in the processing of primary rRNA transcript to yield the immediate precursors to the large and small rRNAs (23S and 16S). Processes some mRNAs, and tRNAs when they are encoded in the rRNA operon. Processes pre-crRNA and tracrRNA of type II CRISPR loci if present in the organism. The chain is Ribonuclease 3 from Nocardia farcinica (strain IFM 10152).